The primary structure comprises 406 residues: Renin (406 aa).

A signal peptide spans 1 to 23 (MDGWRRMPRWGLLLLLWGSCTFG). Residues 24–66 (LPTDTTTFKRIFLKRMPSIRESLKERGVDMARLGPEWSQPMKR) constitute a propeptide, activation peptide. Asn71 carries N-linked (GlcNAc...) asparagine glycosylation. Residues 86-403 (YYGEIGIGTP…DRRNNRIGFA (318 aa)) form the Peptidase A1 domain. Asp104 is a catalytic residue. A disulfide bridge links Cys117 with Cys124. Residue Asn141 is glycosylated (N-linked (GlcNAc...) asparagine). A disulfide bridge links Cys283 with Cys287. Asp292 is an active-site residue. Cys325 and Cys362 are joined by a disulfide.

It belongs to the peptidase A1 family. In terms of assembly, interacts with ATP6AP2.

Its subcellular location is the secreted. The protein resides in the membrane. The catalysed reaction is Cleavage of Leu-|-Xaa bond in angiotensinogen to generate angiotensin I.. Its activity is regulated as follows. Interaction with ATP6AP2 results in a 5-fold increased efficiency in angiotensinogen processing. Renin is a highly specific endopeptidase, whose only known function is to generate angiotensin I from angiotensinogen in the plasma, initiating a cascade of reactions that produce an elevation of blood pressure and increased sodium retention by the kidney. The chain is Renin (REN) from Macaca mulatta (Rhesus macaque).